We begin with the raw amino-acid sequence, 225 residues long: E3 ubiquitin-protein ligase ATL59 (225 aa).

The helical transmembrane segment at 22–42 (FTFIVCVPICVILIVLLVLYI) threads the bilayer. Residues 97–139 (CSVCLGDYQAEEKLQQMPSCGHTFHMECIDLWLTSHTTCPLCR) form an RING-type; atypical zinc finger.

This sequence belongs to the RING-type zinc finger family. ATL subfamily.

The protein resides in the membrane. The catalysed reaction is S-ubiquitinyl-[E2 ubiquitin-conjugating enzyme]-L-cysteine + [acceptor protein]-L-lysine = [E2 ubiquitin-conjugating enzyme]-L-cysteine + N(6)-ubiquitinyl-[acceptor protein]-L-lysine.. Its pathway is protein modification; protein ubiquitination. Functionally, E3 ubiquitin-protein ligase able to catalyze polyubiquitination with ubiquitin-conjugating enzyme E2 UBC8, UBC10, UBC11, and UBC34 in vitro. This chain is E3 ubiquitin-protein ligase ATL59 (ATL59), found in Arabidopsis thaliana (Mouse-ear cress).